We begin with the raw amino-acid sequence, 334 residues long: MTIIVTGAAGFIGSNIVKALNQRGITDIVAVDNLSKGEKFKNLAECEIAHYLDKHEFIRQVREHILPYQNIEAVFHQGACSDTMNHDGLYMMENNYQYTLDLLNWCQDERIPFLYASSAAVYGKGEIFREERELEKPLNVYGYSKFLFDQVLRRRMKEGLTAQVVGFRYFNVYGQHEQHKGRMASVTFHHFHQYREHGYVNLFGSNDGYGNGEQTRDFVSVEDVAKVNLYFFDHPELSGIYNLGTGRSQQFNELAAATVNACRAAEGKPEMSLKELVEEELIRYIPFPDALKGKYQSFTQADITKLREAGYKEEFFDVKSGVDRYVKWMLENLA.

Residues 11-12 (FI), 32-33 (DN), Lys39, Lys54, 77-81 (QGACS), and Asn94 contribute to the NADP(+) site. The active-site Proton acceptor is Tyr141. Lys145 provides a ligand contact to NADP(+). Asn171 is a binding site for substrate. NADP(+)-binding residues include Val172 and Lys180. Residue Lys180 is the Proton acceptor of the active site. Substrate contacts are provided by residues Arg182, His189, 203–206 (FGSN), Arg216, and Tyr295.

The protein belongs to the NAD(P)-dependent epimerase/dehydratase family. HldD subfamily. As to quaternary structure, homopentamer. NADP(+) is required as a cofactor.

It carries out the reaction ADP-D-glycero-beta-D-manno-heptose = ADP-L-glycero-beta-D-manno-heptose. Its pathway is nucleotide-sugar biosynthesis; ADP-L-glycero-beta-D-manno-heptose biosynthesis; ADP-L-glycero-beta-D-manno-heptose from D-glycero-beta-D-manno-heptose 7-phosphate: step 4/4. Catalyzes the interconversion between ADP-D-glycero-beta-D-manno-heptose and ADP-L-glycero-beta-D-manno-heptose via an epimerization at carbon 6 of the heptose. The chain is ADP-L-glycero-D-manno-heptose-6-epimerase from Neisseria meningitidis serogroup C / serotype 2a (strain ATCC 700532 / DSM 15464 / FAM18).